The primary structure comprises 215 residues: Ribose-5-phosphate isomerase A (215 aa).

Substrate-binding positions include 26 to 29 (TGST), 79 to 82 (DGAD), and 92 to 95 (KGGG). Glu-101 serves as the catalytic Proton acceptor. Lys-119 lines the substrate pocket.

The protein belongs to the ribose 5-phosphate isomerase family. Homodimer.

The catalysed reaction is aldehydo-D-ribose 5-phosphate = D-ribulose 5-phosphate. It participates in carbohydrate degradation; pentose phosphate pathway; D-ribose 5-phosphate from D-ribulose 5-phosphate (non-oxidative stage): step 1/1. Catalyzes the reversible conversion of ribose-5-phosphate to ribulose 5-phosphate. The sequence is that of Ribose-5-phosphate isomerase A from Xanthomonas oryzae pv. oryzae (strain PXO99A).